Consider the following 473-residue polypeptide: Protein AUXIN RESPONSE 4 (473 aa).

The span at 1–10 (MAIITEEEED) shows a compositional bias: acidic residues. The interval 1-38 (MAIITEEEEDPKTLNPPKNKPKDSDFTKSESTMKNPKP) is disordered. Polar residues predominate over residues 29-38 (SESTMKNPKP). Residues 44-64 (FPFWFYFTVVVSLATIIFISL) traverse the membrane as a helical segment. The 165-residue stretch at 119-283 (TVVIVHGLGL…DSSISPALPL (165 aa)) folds into the AB hydrolase-1 domain.

In terms of tissue distribution, most abundant in root tissue, lesser amounts in rosette leaves, stems and flowers and very little in mature siliques.

It localises to the endoplasmic reticulum membrane. Functionally, required for the auxin influx facilitator AUX1 polar trafficking and its asymmetric localization within the plasma membrane. Not involved in the PIN proteins localization. In Arabidopsis thaliana (Mouse-ear cress), this protein is Protein AUXIN RESPONSE 4 (AXR4).